The chain runs to 513 residues: Putative ribose/galactose/methyl galactoside import ATP-binding protein 2 (513 aa).

ABC transporter domains are found at residues Leu-24–Glu-260 and Val-270–Leu-510. Gly-56–Ser-63 is a binding site for ATP.

The protein belongs to the ABC transporter superfamily. Carbohydrate importer 2 (CUT2) (TC 3.A.1.2) family.

It localises to the cell inner membrane. The enzyme catalyses D-ribose(out) + ATP + H2O = D-ribose(in) + ADP + phosphate + H(+). It carries out the reaction D-galactose(out) + ATP + H2O = D-galactose(in) + ADP + phosphate + H(+). In terms of biological role, part of an ABC transporter complex involved in carbohydrate import. Could be involved in ribose, galactose and/or methyl galactoside import. Responsible for energy coupling to the transport system. The protein is Putative ribose/galactose/methyl galactoside import ATP-binding protein 2 of Agrobacterium fabrum (strain C58 / ATCC 33970) (Agrobacterium tumefaciens (strain C58)).